Reading from the N-terminus, the 369-residue chain is Phospho-N-acetylmuramoyl-pentapeptide-transferase (369 aa).

10 helical membrane passes run 30–50, 74–94, 97–117, 136–156, 177–197, 208–228, 244–264, 272–292, 297–317, and 346–366; these read LAIF…IRWM, GTPT…TLLW, LSNP…LLGF, IRLA…IVFA, YFVD…VGAA, GLAT…AYLV, GVGE…GFLW, IFMG…VAVA, IVLA…IIQV, and TVVI…LATL.

This sequence belongs to the glycosyltransferase 4 family. MraY subfamily. The cofactor is Mg(2+).

The protein resides in the cell inner membrane. It catalyses the reaction UDP-N-acetyl-alpha-D-muramoyl-L-alanyl-gamma-D-glutamyl-meso-2,6-diaminopimeloyl-D-alanyl-D-alanine + di-trans,octa-cis-undecaprenyl phosphate = di-trans,octa-cis-undecaprenyl diphospho-N-acetyl-alpha-D-muramoyl-L-alanyl-D-glutamyl-meso-2,6-diaminopimeloyl-D-alanyl-D-alanine + UMP. The protein operates within cell wall biogenesis; peptidoglycan biosynthesis. Catalyzes the initial step of the lipid cycle reactions in the biosynthesis of the cell wall peptidoglycan: transfers peptidoglycan precursor phospho-MurNAc-pentapeptide from UDP-MurNAc-pentapeptide onto the lipid carrier undecaprenyl phosphate, yielding undecaprenyl-pyrophosphoryl-MurNAc-pentapeptide, known as lipid I. This chain is Phospho-N-acetylmuramoyl-pentapeptide-transferase, found in Phenylobacterium zucineum (strain HLK1).